The chain runs to 201 residues: 3-isopropylmalate dehydratase small subunit (201 aa).

It belongs to the LeuD family. LeuD type 1 subfamily. As to quaternary structure, heterodimer of LeuC and LeuD.

It catalyses the reaction (2R,3S)-3-isopropylmalate = (2S)-2-isopropylmalate. The protein operates within amino-acid biosynthesis; L-leucine biosynthesis; L-leucine from 3-methyl-2-oxobutanoate: step 2/4. Functionally, catalyzes the isomerization between 2-isopropylmalate and 3-isopropylmalate, via the formation of 2-isopropylmaleate. The chain is 3-isopropylmalate dehydratase small subunit from Erwinia tasmaniensis (strain DSM 17950 / CFBP 7177 / CIP 109463 / NCPPB 4357 / Et1/99).